We begin with the raw amino-acid sequence, 131 residues long: Small ribosomal subunit protein uS8 (131 aa).

It belongs to the universal ribosomal protein uS8 family. In terms of assembly, part of the 30S ribosomal subunit. Contacts proteins S5 and S12.

One of the primary rRNA binding proteins, it binds directly to 16S rRNA central domain where it helps coordinate assembly of the platform of the 30S subunit. This chain is Small ribosomal subunit protein uS8, found in Thermodesulfovibrio yellowstonii (strain ATCC 51303 / DSM 11347 / YP87).